Consider the following 494-residue polypeptide: Leucine-rich repeat extensin-like protein 4 (494 aa).

The N-terminal stretch at 1 to 25 (MKNNTTQSLLLLLLFFFFFFEISHS) is a signal peptide. 3 N-linked (GlcNAc...) asparagine glycosylation sites follow: N60, N94, and N106. LRR repeat units follow at residues 121–145 (IRTVAGIDLNHADIAGYLPEELGLL), 146–168 (TDLALFHVNSNRFCGTVPHKFKQ), 169–193 (LKLLFELDLSNNRFAGKFPTVVLHL), 194–217 (PSLKFLDLRFNEFEGTVPKELFSK), 219–240 (LDAIFINHNRFRFELPENFGDS), 242–263 (VSVIVLANNHFHGCIPTSLVEM), 264–287 (KNLNEIIFMNNGLNSCLPADIGRL), 289–311 (NVTVFDVSFNELVGPLPESVGGM), and 312–335 (VEVEQLNVAHNLLSGKIPASICQL). N-linked (GlcNAc...) asparagine glycosylation is present at N289. The N-linked (GlcNAc...) asparagine glycan is linked to N340. Residues 404-494 (SPPIVALPPP…YASPPPPPFY (91 aa)) form a contains the Ser-Pro(4) repeats region. The span at 422 to 479 (PPVYSPPPSPPVFSPPPSPPVYSPPPPPSIHYSSPPPPPVHHSSPPPPSPEFEGPLPP) shows a compositional bias: pro residues. A disordered region spans residues 422 to 482 (PPVYSPPPSP…FEGPLPPVIG (61 aa)).

In terms of processing, hydroxylated on proline residues in the S-P-P-P-P repeat. Post-translationally, O-glycosylated on hydroxyprolines. Expressed in roots, stems, leaves and flowers, mostly in vascular tissues.

It is found in the secreted. It localises to the cell wall. In terms of biological role, modulates cell morphogenesis by regulating cell wall formation and assembly, and/or growth polarization. This Arabidopsis thaliana (Mouse-ear cress) protein is Leucine-rich repeat extensin-like protein 4 (LRX4).